We begin with the raw amino-acid sequence, 328 residues long: MQTTSWLEIAVEVDPEAVETVSEILARYGYNGGVVVEQSWIAGDEGPEFQYDPNRPVWLRTYLPLDAQAEETRQQIEHALWHVHQIRPLGPIQTRTLAEEDWANAWKQFYPVLRVGERTVIVPSWLEYQPQPNDVVLLLDPGMAFGTGLHPTTRLCLHLLERLVQPGQQVLDLGTGSGILAIAAAKLGAGQVLALDNDPIAVRVAHENVERNQVQDLVTVAEGSLGAGQAMGHWLSGDFGPETPDPTLHDNTPQATFDLIAANLIAKVLVLLAPDLATALKPGGLLISSGIIDVKEAEVVAAFAAVGLQQIERHVEGEWVALVHRRPQ.

Residues Thr153, Gly174, Asp196, and Asn263 each coordinate S-adenosyl-L-methionine.

Belongs to the methyltransferase superfamily. PrmA family.

The protein resides in the cytoplasm. It carries out the reaction L-lysyl-[protein] + 3 S-adenosyl-L-methionine = N(6),N(6),N(6)-trimethyl-L-lysyl-[protein] + 3 S-adenosyl-L-homocysteine + 3 H(+). In terms of biological role, methylates ribosomal protein L11. This Chloroflexus aurantiacus (strain ATCC 29366 / DSM 635 / J-10-fl) protein is Ribosomal protein L11 methyltransferase.